Here is a 537-residue protein sequence, read N- to C-terminus: Fucosyltransferase 6 (537 aa).

At 1-20 (MYHIFQISSEVFRAFGLKMK) the chain is on the cytoplasmic side. A helical; Signal-anchor for type II membrane protein membrane pass occupies residues 21–41 (ILLTLVFSGLLIWSVVLVSFS). The Lumenal segment spans residues 42 to 537 (NDFNNQLLVA…NDGLKLFDEL (496 aa)). Residues N54, N231, and N378 are each glycosylated (N-linked (GlcNAc...) asparagine).

It belongs to the glycosyltransferase 37 family. In terms of tissue distribution, expressed in roots and flowers.

It is found in the golgi apparatus. Its subcellular location is the golgi stack membrane. It functions in the pathway protein modification; protein glycosylation. May be involved in cell wall biosynthesis. May act as a fucosyltransferase. The sequence is that of Fucosyltransferase 6 (FUT6) from Arabidopsis thaliana (Mouse-ear cress).